Reading from the N-terminus, the 274-residue chain is Acetyl-coenzyme A carboxylase carboxyl transferase subunit alpha (274 aa).

Residues 2-250 (NKEFIKSIVV…KKEIMNAMNE (249 aa)) form the CoA carboxyltransferase C-terminal domain.

Belongs to the AccA family. Acetyl-CoA carboxylase is a heterohexamer composed of biotin carboxyl carrier protein (AccB), biotin carboxylase (AccC) and two subunits each of ACCase subunit alpha (AccA) and ACCase subunit beta (AccD).

The protein resides in the cytoplasm. It catalyses the reaction N(6)-carboxybiotinyl-L-lysyl-[protein] + acetyl-CoA = N(6)-biotinyl-L-lysyl-[protein] + malonyl-CoA. It participates in lipid metabolism; malonyl-CoA biosynthesis; malonyl-CoA from acetyl-CoA: step 1/1. Component of the acetyl coenzyme A carboxylase (ACC) complex. First, biotin carboxylase catalyzes the carboxylation of biotin on its carrier protein (BCCP) and then the CO(2) group is transferred by the carboxyltransferase to acetyl-CoA to form malonyl-CoA. The polypeptide is Acetyl-coenzyme A carboxylase carboxyl transferase subunit alpha (Clostridium botulinum (strain Alaska E43 / Type E3)).